We begin with the raw amino-acid sequence, 101 residues long: uncharacterized protein (101 aa).

2 consecutive transmembrane segments (helical) span residues Val-52–Leu-72 and Leu-75–Gly-95.

The protein localises to the endoplasmic reticulum membrane. This is an uncharacterized protein from Schizosaccharomyces pombe (strain 972 / ATCC 24843) (Fission yeast).